We begin with the raw amino-acid sequence, 333 residues long: PDZ domain-containing protein GIPC1 (333 aa).

A compositionally biased stretch (basic residues) spans 1–11; that stretch reads MPLGLGRRKKA. Residues 1–54 form a disordered region; it reads MPLGLGRRKKAPPLVENEEAEPGRGGLGVGEPGPLGGGGSGGPQMGLPPPPPAL. Residues 23–44 show a composition bias toward gly residues; sequence GRGGLGVGEPGPLGGGGSGGPQ. Ser-68 carries the post-translational modification Phosphoserine. Residues 133 to 213 form the PDZ domain; the sequence is EVEVFKSEDA…GRTFTLKLTE (81 aa). Phosphoserine occurs at positions 222, 225, and 232. The disordered stretch occupies residues 223 to 244; it reads QRSAGGRPGSGPQLGTGRGTLR. Over residues 228–240 the composition is skewed to gly residues; sequence GRPGSGPQLGTGR. Thr-242 carries the post-translational modification Phosphothreonine. Position 247 is a phosphoserine (Ser-247).

This sequence belongs to the GIPC family. As to quaternary structure, interacts with GLUT1 (C-terminus), ACTN1, KIF1B, MYO6, PLEKHG5, SDC4/syndecan-4 and SEMA4C/semaphorin-4C. Interacts with RGS19 C-terminus. Interacts with HTLV-I Tax through the PDZ domain. As to expression, widely expressed. Expressed in skeletal muscle (at protein level).

It localises to the cytoplasm. It is found in the membrane. Functionally, may be involved in G protein-linked signaling. The chain is PDZ domain-containing protein GIPC1 (GIPC1) from Homo sapiens (Human).